Here is a 2332-residue protein sequence, read N- to C-terminus: Phosphatidylinositol phosphatase PTPRQ (2332 aa).

A signal peptide spans methionine 1 to valine 35. Fibronectin type-III domains follow at residues glutamate 36–glycine 99, proline 100–serine 195, lysine 199–threonine 294, proline 350–valine 438, alanine 441–aspartate 539, glycine 514–threonine 606, valine 610–aspartate 705, serine 710–threonine 799, alanine 804–aspartate 894, proline 899–glycine 988, proline 993–aspartate 1093, phenylalanine 1098–aspartate 1190, proline 1192–serine 1282, proline 1287–serine 1380, valine 1384–threonine 1470, valine 1474–glycine 1578, proline 1583–serine 1681, and proline 1686–proline 1787. The Extracellular segment spans residues glutamate 36–glutamate 1947. Asparagine 94 is a glycosylation site (N-linked (GlcNAc...) asparagine). Asparagine 202 and asparagine 394 each carry an N-linked (GlcNAc...) asparagine glycan. N-linked (GlcNAc...) asparagine glycosylation is found at asparagine 944, asparagine 1038, asparagine 1080, and asparagine 1101. Asparagine 1290 and asparagine 1295 each carry an N-linked (GlcNAc...) asparagine glycan. A glycan (N-linked (GlcNAc...) asparagine) is linked at asparagine 1844. Residues isoleucine 1948–alanine 1968 form a helical membrane-spanning segment. At phenylalanine 1969–methionine 2332 the chain is on the cytoplasmic side. Positions phenylalanine 2036–leucine 2292 constitute a Tyrosine-protein phosphatase domain. Cysteine 2233 (phosphocysteine intermediate) is an active-site residue.

This sequence belongs to the protein-tyrosine phosphatase family. Receptor class 2A subfamily. As to quaternary structure, interacts with TPRN. TPRN, CLIC5 and PTPQR form concentric rings at the base of stereocilia and may form a complex. As to expression, in developing kidney, it localizes to the basal membrane of podocytes, beginning when podocyte progenitors can first be identified in the embryonic kidney (at protein level). Expressed in lung and kidney.

The protein localises to the cell projection. It localises to the stereocilium. The protein resides in the apical cell membrane. It is found in the basal cell membrane. It catalyses the reaction a 1,2-diacyl-sn-glycero-3-phospho-(1D-myo-inositol-3,4,5-trisphosphate) + H2O = a 1,2-diacyl-sn-glycero-3-phospho-(1D-myo-inositol-4,5-bisphosphate) + phosphate. The catalysed reaction is a 1,2-diacyl-sn-glycero-3-phospho-(1D-myo-inositol-3,4,5-trisphosphate) + H2O = a 1,2-diacyl-sn-glycero-3-phospho-(1D-myo-inositol-3,4-bisphosphate) + phosphate. The enzyme catalyses a 1,2-diacyl-sn-glycero-3-phospho-(1D-myo-inositol-3,5-bisphosphate) + H2O = a 1,2-diacyl-sn-glycero-3-phospho-(1D-myo-inositol-5-phosphate) + phosphate. It carries out the reaction a 1,2-diacyl-sn-glycero-3-phospho-(1D-myo-inositol-3,5-bisphosphate) + H2O = a 1,2-diacyl-sn-glycero-3-phospho-(1D-myo-inositol-3-phosphate) + phosphate. Dephosphorylates phosphatidylinositol phosphates, such as phosphatidylinositol 3,4,5-trisphosphate (PIP3) and phosphatidylinositol 3,5-diphosphates, with preference for PIP3. Phosphate can be hydrolyzed from the D3 and D5 positions in the inositol ring. Has low tyrosine-protein phosphatase activity in vitro; however, the relevance of such activity in vivo is unclear. Plays an important role in adipogenesis of mesenchymal stem cells (MSCs). Regulates the phosphorylation state of AKT1 by regulating the levels of PIP3 in MSCs and preadipocyte cells. Required for hair bundle maturation, a process that enables hair cells to detect and transmit sound and balance signals effectively, therefore affecting auditory function. May act by regulating the level of phosphatidylinositol 4,5-bisphosphate (PIP2) level in the basal region of hair bundles. The protein is Phosphatidylinositol phosphatase PTPRQ (PTPRQ) of Homo sapiens (Human).